Reading from the N-terminus, the 204-residue chain is Protein GrpE (204 aa).

The disordered stretch occupies residues 1–52 (MSSKNNPESETKAKNKWEKVMEAEEEQEEGGGDGSQEMEPHREGLEFPSREK). Composition is skewed to basic and acidic residues over residues 7–22 (PESE…KVME) and 38–52 (MEPH…SREK).

Belongs to the GrpE family. Homodimer.

The protein localises to the cytoplasm. Functionally, participates actively in the response to hyperosmotic and heat shock by preventing the aggregation of stress-denatured proteins, in association with DnaK and GrpE. It is the nucleotide exchange factor for DnaK and may function as a thermosensor. Unfolded proteins bind initially to DnaJ; upon interaction with the DnaJ-bound protein, DnaK hydrolyzes its bound ATP, resulting in the formation of a stable complex. GrpE releases ADP from DnaK; ATP binding to DnaK triggers the release of the substrate protein, thus completing the reaction cycle. Several rounds of ATP-dependent interactions between DnaJ, DnaK and GrpE are required for fully efficient folding. The chain is Protein GrpE from Coxiella burnetii (strain Dugway 5J108-111).